Consider the following 462-residue polypeptide: Toxin CqTX-A (462 aa).

The signal sequence occupies residues 1-19; it reads MANMLYFSLLALLFMTGIA. N-linked (GlcNAc...) asparagine glycosylation occurs at Asn174.

This sequence belongs to the jellyfish toxin family. Type I subfamily. In terms of processing, contains disulfide bonds. Post-translationally, N-glycosylated.

The protein localises to the secreted. The protein resides in the nematocyst. It localises to the target cell membrane. Functionally, critical allergen and main toxic protein of C.quadrigatus venom. Has potent hemolytic activity. Is lethal to crayfish. Causes cutaneous inflammation in humans. May act as a pore-forming toxin, disrupting normal transmembrane ion concentration gradients in susceptible cells. In Chiropsoides quadrigatus (Box jellyfish), this protein is Toxin CqTX-A.